Here is a 450-residue protein sequence, read N- to C-terminus: Ceramide glucosyltransferase (450 aa).

Residues 1–8 are Lumenal-facing; the sequence is MSDSGTLS. A helical transmembrane segment spans residues 9-29; the sequence is LIGGIVFLVLWVVVWSICLLG. The Cytoplasmic portion of the chain corresponds to 30–337; the sequence is WRTARIRYAH…IRVRKKMTLA (308 aa). Residue Asp96 is a short sequence motif, D1. Residue Asp148 is a short sequence motif, D2. Asp286 is a short sequence motif (D3). Asp286 (proton acceptor) is an active-site residue. The (Q/R)XXRW signature appears at 323 to 327; the sequence is RRVRW. Residues 338–358 traverse the membrane as a helical segment; sequence ATLLEPLTESIISGLYGAWAI. Residues 359-361 lie on the Lumenal side of the membrane; sequence SRL. A helical transmembrane segment spans residues 362 to 382; the sequence is LGGNILPLFLLHMAAWISVDI. The Cytoplasmic portion of the chain corresponds to 383–401; that stretch reads STKRALETNIKGIGPPESK. The helical transmembrane segment at 402 to 422 threads the bilayer; that stretch reads VTFLMAWAARECLALPIWMLA. Topologically, residues 423–450 are lumenal; sequence MTSSEVVWRGQKYKIIASGEAIRLGDRN.

The protein belongs to the glycosyltransferase 2 family.

It localises to the golgi apparatus membrane. It catalyses the reaction an N-acylsphing-4-enine + UDP-alpha-D-glucose = a beta-D-glucosyl-(1&lt;-&gt;1')-N-acylsphing-4-enine + UDP + H(+). It participates in lipid metabolism; sphingolipid metabolism. Its function is as follows. Catalyzes the final step in the biosynthesis of the membrane lipid glucosylceramide (GluCer), the transfer of glucose to ceramide. Glucosylceramides play important roles in growth, differentiation and pathogenicity. Essential factor in determining the success of fungal infection by regulating survival of yeast cells during the initial colonization of the host lung. The sequence is that of Ceramide glucosyltransferase from Cryptococcus neoformans var. grubii serotype A (strain H99 / ATCC 208821 / CBS 10515 / FGSC 9487) (Filobasidiella neoformans var. grubii).